The following is an 861-amino-acid chain: Leucine--tRNA ligase (861 aa).

Positions 42–52 (PYPSGNLHMGH) match the 'HIGH' region motif. The 'KMSKS' region motif lies at 620–624 (KMSKS). Lysine 623 is an ATP binding site.

Belongs to the class-I aminoacyl-tRNA synthetase family.

It is found in the cytoplasm. The catalysed reaction is tRNA(Leu) + L-leucine + ATP = L-leucyl-tRNA(Leu) + AMP + diphosphate. The polypeptide is Leucine--tRNA ligase (Baumannia cicadellinicola subsp. Homalodisca coagulata).